Here is a 596-residue protein sequence, read N- to C-terminus: Succinate dehydrogenase flavoprotein subunit (596 aa).

Residues 18-23 (GAGGAG), 41-56 (TKLF…AQGG), and aspartate 225 contribute to the FAD site. Histidine 49 bears the Tele-8alpha-FAD histidine mark. Substrate is bound by residues histidine 246 and threonine 258. Arginine 290 (proton acceptor) is an active-site residue. Histidine 357 is a binding site for substrate. Glutamate 391 is an FAD binding site. Arginine 402 serves as a coordination point for substrate. 407-408 (SL) contributes to the FAD binding site.

Belongs to the FAD-dependent oxidoreductase 2 family. FRD/SDH subfamily. In terms of assembly, part of an enzyme complex containing four subunits: a flavoprotein, an iron-sulfur, cytochrome b-556, and a hydrophobic anchor protein. It depends on FAD as a cofactor.

It is found in the cell inner membrane. It carries out the reaction a quinone + succinate = fumarate + a quinol. It functions in the pathway carbohydrate metabolism; tricarboxylic acid cycle; fumarate from succinate (bacterial route): step 1/1. This Rickettsia conorii (strain ATCC VR-613 / Malish 7) protein is Succinate dehydrogenase flavoprotein subunit (sdhA).